The following is a 290-amino-acid chain: Glycine-N-acyltransferase-like protein 3 (290 aa).

The catalysed reaction is an acyl-CoA + glycine = an N-acylglycine + CoA + H(+). The enzyme catalyses (9Z)-octadecenoyl-CoA + glycine = N-(9Z-octadecenoyl)glycine + CoA + H(+). It carries out the reaction hexadecanoyl-CoA + glycine = N-hexadecanoylglycine + CoA + H(+). It participates in lipid metabolism. Catalyzes the conjugation of long-chain fatty acyl-CoA thioester and glycine to produce long-chain N-(fatty acyl)glycine, an intermediate in the primary fatty acid amide biosynthetic pathway. The polypeptide is Glycine-N-acyltransferase-like protein 3 (Mus musculus (Mouse)).